We begin with the raw amino-acid sequence, 26 residues long: Small toxic protein ShoB (26 aa).

A helical transmembrane segment spans residues 7-24 (LIKRVIKIIIAVLQLILL).

Its subcellular location is the membrane. Functionally, toxic component of a type I toxin-antitoxin (TA) system. May be a toxic protein; overexpression causes cessation of growth and rapid membrane depolarization. Overexpression induces stress-response and a number of membrane protein genes. This is Small toxic protein ShoB (shoB) from Escherichia coli (strain K12).